The sequence spans 174 residues: Small t antigen (174 aa).

At Met1 the chain carries N-acetylmethionine; by host. In terms of domain architecture, J spans 12 to 75; it reads QLMDLLGLER…VKYAHQPDFG (64 aa). A C4-type; atypical zinc finger spans residues 103–116; it reads CAKKMSANCICLLC. The segment at 122–143 adopts an H1C3-type; atypical zinc-finger fold; sequence HENRKLYRKDPLVWVDCYCFDC.

As to quaternary structure, interacts with host PPP2R1A; the interaction inhibits PP2A activity.

It localises to the host cytoplasm. Its subcellular location is the host nucleus. In terms of biological role, promotes efficient viral genome replication by accelerating both G1 and S phase progression of the cell cycle. Inhibits host PP2A by binding to the A subunit, thereby displacing lower affinity regulatory B subunit. Inactivation of PP2A in turn results in the transactivation of cyclin A and cyclin D1 promoters. Late during the infection cycle, ST may induce dephosphorylation of host eIF4E-binding protein EIF4EBP1 leading to the inhibition of cap-dependent translation. May establish and maintain high levels of viral genomes during persistent infection in cell culture. In Simian virus 40 (SV40), this protein is Small t antigen.